The chain runs to 274 residues: 4-diphosphocytidyl-2-C-methyl-D-erythritol kinase (274 aa).

K8 is an active-site residue. 94–104 (PSGAGLGGGSA) contacts ATP. D136 is an active-site residue.

It belongs to the GHMP kinase family. IspE subfamily.

The catalysed reaction is 4-CDP-2-C-methyl-D-erythritol + ATP = 4-CDP-2-C-methyl-D-erythritol 2-phosphate + ADP + H(+). It participates in isoprenoid biosynthesis; isopentenyl diphosphate biosynthesis via DXP pathway; isopentenyl diphosphate from 1-deoxy-D-xylulose 5-phosphate: step 3/6. In terms of biological role, catalyzes the phosphorylation of the position 2 hydroxy group of 4-diphosphocytidyl-2C-methyl-D-erythritol. This is 4-diphosphocytidyl-2-C-methyl-D-erythritol kinase from Bacteroides fragilis (strain YCH46).